The sequence spans 419 residues: Inward rectifier potassium channel 16 (419 aa).

Residues 1 to 67 (MSYYGSSYRI…MVDIFTTLVD (67 aa)) lie on the Cytoplasmic side of the membrane. Residues 68 to 94 (TKWRHMFVVFSLSYILSWLIFGSIFWL) form a helical membrane-spanning segment. Over 95 to 117 (IALHHGDLLSDPDITPCVDNVHS) the chain is Extracellular. Positions 118–134 (FTAAFLFSLETQTTIGY) form an intramembrane region, helical; Pore-forming. A Selectivity filter motif is present at residues 131-136 (TIGYGY). Over 135 to 143 (GYRCVTEEC) the chain is Extracellular. Residues 144–171 (SVAVLTVILQSILSCIINTFIIGAALAK) form a helical membrane-spanning segment. Residues 172–419 (MATARKRAQT…LNRISMESQM (248 aa)) are Cytoplasmic-facing. A phosphoserine mark is found at serine 358, serine 374, and serine 376.

It belongs to the inward rectifier-type potassium channel (TC 1.A.2.1) family. KCNJ16 subfamily. As to quaternary structure, it forms heteromeric channels with Kir4.1/KCNJ10; this interaction is required for KCNJ16 localization to the basolateral membrane in kidney cells. As a heteromer with KCNJ10, may interact with MAGI1; this interaction may facilitate KCNJ10/KCNJ16 potassium channel expression at the basolateral membrane in kidney cells. May form heteromers with Kir2.1/KCNJ2. Can form heteromeric channels with Kir4.2/KCNJ15. In terms of tissue distribution, expressed in the brain, testis, liver, spleen, kidney, submaxillary gland and adrenals. In the kidney, expressed in the epithelial cells of both proximal and distal convoluted tubules, in the endothelial cells surrounding glomerular capillaries and in the flattened parietal layer of Bowman's capsule.

It is found in the membrane. The protein localises to the basolateral cell membrane. It carries out the reaction K(+)(in) = K(+)(out). With respect to regulation, channel activity is strongly regulated by variations of cytosolic pH; channels are activated by alkaline and inhibited by acidic pH values. Activated by phosphatidylinositol 4,5 biphosphate (PtdIns(4,5)P2). Its function is as follows. Inward rectifier potassium channels are characterized by a greater tendency to allow potassium to flow into the cell rather than out of it. Their voltage dependence is regulated by the concentration of extracellular potassium; as external potassium is raised, the voltage range of the channel opening shifts to more positive voltages. The inward rectification is mainly due to the blockage of outward current by internal magnesium. KCNJ16 may be involved in the regulation of fluid and pH balance. In the kidney, together with KCNJ10, mediates basolateral K(+) recycling in distal tubules; this process is critical for Na(+) reabsorption at the tubules. This Rattus norvegicus (Rat) protein is Inward rectifier potassium channel 16 (Kcnj16).